Reading from the N-terminus, the 244-residue chain is Uridylate kinase (244 aa).

ATP is bound at residue 17-20 (KVSG). The interval 25–30 (GDKGFG) is involved in allosteric activation by GTP. A UMP-binding site is contributed by glycine 59. The ATP site is built by glycine 60 and arginine 64. UMP is bound by residues aspartate 80 and 141-148 (VGNPFFTT). Residues threonine 168, glutamine 169, tyrosine 174, and aspartate 177 each coordinate ATP.

It belongs to the UMP kinase family. Homohexamer.

Its subcellular location is the cytoplasm. The catalysed reaction is UMP + ATP = UDP + ADP. The protein operates within pyrimidine metabolism; CTP biosynthesis via de novo pathway; UDP from UMP (UMPK route): step 1/1. With respect to regulation, allosterically activated by GTP. Inhibited by UTP. In terms of biological role, catalyzes the reversible phosphorylation of UMP to UDP. This is Uridylate kinase from Ehrlichia ruminantium (strain Welgevonden).